The primary structure comprises 532 residues: Omega-hydroxyceramide transacylase (532 aa).

Residues 16–185 form the PNPLA domain; the sequence is ISFSGSGFLS…TGMQPCAFWT (170 aa). Residues 51–55 carry the GXSXG motif; the sequence is GTSAG. The Nucleophile role is filled by S53. D172 functions as the Proton acceptor in the catalytic mechanism. The DGA/G motif lies at 172–174; it reads DGG. 2 disordered regions span residues 290-457 and 489-532; these read PERS…ELGQ and VTES…SKVQ. Positions 310–322 are enriched in basic and acidic residues; sequence PHKEWVPKGDGRG. Composition is skewed to low complexity over residues 380 to 389 and 397 to 411; these read PPSSTPGSSL and SPLS…SGSP. Basic residues predominate over residues 517–532; it reads GFPRHSGSKKPSSKVQ.

Expressed in the digestive system. Expressed in the epidermis of skin keratinocytes. Strongly expressed in the granular layer. Expressed in the upper epidermis and eccrine sweat glands of the dermis and in the region of keratin filament bundles, which is more pronounced in upper epidermal layers and in the lower cornified layers.

The protein localises to the cytoplasm. The enzyme catalyses an N-(omega-hydroxy-ultra-long chain fatty acyl)-sphingoid base + a (9Z,12Z)-octadecadienoyl-containing triacyl-sn-glycerol = an N-[omega-(9Z,12Z-octadecadienoyloxy)-O-ultra-long chain fatty acyl]-sphingoid base + a diacylglycerol. It carries out the reaction an N-(omega-hydroxy-ultra-long chain fatty acyl)-sphing-4-enine + a (9Z,12Z)-octadecadienoyl-containing triacyl-sn-glycerol = an N-(omega-(9Z,12Z-octadecadienoyloxy)-ultra-long chain fatty acyl)-sphing-4-enine + a diacylglycerol. It catalyses the reaction N-(30-hydroxytriacontanoyl)-sphing-4-enine + 1,2,3-tri-(9Z,12Z)-octadecadienoylglycerol = N-[30-(9Z,12Z-octadecadienoyloxy)-triacontanoyl]-sphing-4-enine + di-(9Z,12Z)-octadecadienoylglycerol. The catalysed reaction is N-(28-hydroxyoctacosanoyl)-sphing-4-enine + a (9Z,12Z)-octadecadienoyl-containing triacyl-sn-glycerol = N-(28-(9Z,12Z-octadecadienoyloxy)-octacosanoyl)-sphing-4-enine + a diacylglycerol. The enzyme catalyses N-(32-hydroxydotriacontanoyl)-sphing-4-enine + a (9Z,12Z)-octadecadienoyl-containing triacyl-sn-glycerol = N-(32-(9Z,12Z-octadecadienoyloxy)-dotricontanoyl)-sphing-4-enine + a diacylglycerol. It carries out the reaction N-(32-hydroxydotriacontenoyl)-sphing-4-enine + a (9Z,12Z)-octadecadienoyl-containing triacyl-sn-glycerol = an N-(32-(9Z,12Z-octadecadienoyloxy)-dotriacontenoyl)-sphing-4-enine + a diacylglycerol. It catalyses the reaction an N-(34-hydroxytetratriacontenoyl)-sphing-4-enine + a (9Z,12Z)-octadecadienoyl-containing triacyl-sn-glycerol = an N-(34-(9Z,12Z-octadecadienoyloxy)-tetratriacontenoyl)-sphing-4-enine + a diacylglycerol. The catalysed reaction is an N-(34-hydroxytetratriacontadienoyl)-sphing-4-enine + a (9Z,12Z)-octadecadienoyl-containing triacyl-sn-glycerol = an N-(34-(9Z,12Z-octadecadienoyloxy)-tetratriacontadienoyl)-sphing-4-enine + a diacylglycerol. The enzyme catalyses an N-(36-hydroxyhexatriacontenoyl)-sphing-4-enine + a (9Z,12Z)-octadecadienoyl-containing triacyl-sn-glycerol = an N-(36-(9Z,12Z-octadecadienoyloxy)-hexatriacontenoyl)-sphing-4-enine + a diacylglycerol. It carries out the reaction an N-(36-hydroxyhexatriacontadienoyl)-sphing-4-enine + a (9Z,12Z)-octadecadienoyl-containing triacyl-sn-glycerol = an N-(36-(9Z,12Z-octadecadienoyloxy)-hexatriacontadienoyl)-sphing-4-enine + a diacylglycerol. It catalyses the reaction an N-(38-hydroxyoctatriacontenoyl)-sphing-4-enine + a (9Z,12Z)-octadecadienoyl-containing triacyl-sn-glycerol = an N-(38-(9Z,12Z-octadecadienoyloxy)-octatriacontenoyl)-sphing-4-enine + a diacylglycerol. Omega-hydroxyceramide transacylase involved in the synthesis of omega-O-acylceramides (esterified omega-hydroxyacyl-sphingosine; EOS), which are extremely hydrophobic lipids involved in skin barrier formation. Catalyzes the last step of the synthesis of omega-O-acylceramides by transferring linoleic acid from triglycerides to an omega-hydroxyceramide. Omega-O-acylceramides, are required for the biogenesis of lipid lamellae in the stratum corneum and the formation of the cornified lipid envelope which are essential for the epidermis barrier function. These lipids also play a role in keratinocyte differentiation. May also act on omega-hydroxylated ultra-long chain fatty acids (omega-OH ULCFA) and acylglucosylceramides (GlcEOS). This is Omega-hydroxyceramide transacylase from Homo sapiens (Human).